The chain runs to 715 residues: DNA ligase (715 aa).

NAD(+) contacts are provided by residues 47 to 51 (DADYD), 96 to 97 (SL), and E128. K130 acts as the N6-AMP-lysine intermediate in catalysis. The NAD(+) site is built by R151, E188, K306, and K330. C435, C438, C453, and C459 together coordinate Zn(2+). One can recognise a BRCT domain in the interval 637–715 (RRDTAVAGKT…EDEWLALIGN (79 aa)).

It belongs to the NAD-dependent DNA ligase family. LigA subfamily. It depends on Mg(2+) as a cofactor. The cofactor is Mn(2+).

The catalysed reaction is NAD(+) + (deoxyribonucleotide)n-3'-hydroxyl + 5'-phospho-(deoxyribonucleotide)m = (deoxyribonucleotide)n+m + AMP + beta-nicotinamide D-nucleotide.. Its function is as follows. DNA ligase that catalyzes the formation of phosphodiester linkages between 5'-phosphoryl and 3'-hydroxyl groups in double-stranded DNA using NAD as a coenzyme and as the energy source for the reaction. It is essential for DNA replication and repair of damaged DNA. The polypeptide is DNA ligase (Rhodopseudomonas palustris (strain ATCC BAA-98 / CGA009)).